A 318-amino-acid polypeptide reads, in one-letter code: Probable ABC transporter permease protein MG189 (318 aa).

6 consecutive transmembrane segments (helical) span residues 42-62 (VLGF…VVSF), 98-118 (AIVV…FFTI), 134-154 (LVWF…LIGQ), 169-189 (PLIV…GFMY), 230-250 (VGIL…LLLG), and 282-302 (LKMS…FLFH). Positions 99-301 (IVVNTLVTVL…LPMFIIYFLF (203 aa)) constitute an ABC transmembrane type-1 domain.

It belongs to the binding-protein-dependent transport system permease family. MalFG subfamily.

Its subcellular location is the cell membrane. In terms of biological role, probably part of a binding-protein-dependent transport system. Probably responsible for the translocation of the substrate across the membrane. The polypeptide is Probable ABC transporter permease protein MG189 (Mycoplasma genitalium (strain ATCC 33530 / DSM 19775 / NCTC 10195 / G37) (Mycoplasmoides genitalium)).